Consider the following 616-residue polypeptide: Electron transfer flavoprotein-ubiquinone oxidoreductase, mitochondrial (616 aa).

A mitochondrion-targeting transit peptide spans 1 to 32 (MLVRLTKLSCPAYQWFHALKIKKCLPLCAPRC). Residue 70–84 (VVIVGAGPAGLSAAI) coordinates FAD. Residue Lys-95 is modified to N6-acetyllysine. The stretch at 108-129 (IGAHTLSGACLDPAAFKELFPD) is an intramembrane region. Lys-131 and Lys-222 each carry N6-acetyllysine. Residues Gly-304 and Gly-305 each contribute to the a ubiquinone site. N6-acetyllysine occurs at positions 356 and 415. The stretch at 427–446 (AGLHVTEYEDNLKQSWVWKE) is an intramembrane region. Ser-550 carries the phosphoserine modification. The [4Fe-4S] cluster site is built by Cys-560, Cys-585, Cys-588, and Cys-591. The 4Fe-4S ferredoxin-type domain occupies 576–605 (FRLQINAQNCVHCKTCDIKDPSQNINWVVP).

It belongs to the ETF-QO/FixC family. As to quaternary structure, monomer. Requires [4Fe-4S] cluster as cofactor. It depends on FAD as a cofactor.

The protein resides in the mitochondrion inner membrane. The catalysed reaction is a ubiquinone + reduced [electron-transfer flavoprotein] = a ubiquinol + oxidized [electron-transfer flavoprotein] + H(+). In terms of biological role, accepts electrons from ETF and reduces ubiquinone. This is Electron transfer flavoprotein-ubiquinone oxidoreductase, mitochondrial (Etfdh) from Rattus norvegicus (Rat).